Consider the following 207-residue polypeptide: Histone H1-like protein HC2 (207 aa).

Basic residues-rich tracts occupy residues 1-50 (MLGV…KTVA) and 59-72 (PAAK…APVR). The segment at 1–72 (MLGVQKKRST…KTAAKKAPVR (72 aa)) is disordered. 3 consecutive repeat copies span residues 35 to 58 (VRKV…AARK), 71 to 94 (VRKV…AARK), and 113 to 136 (VRKV…AARK). A 3 X 24 AA repeats of V-R-K-V-A-A-K-K-T-V-A-R-K-T-V-A-K-K-A-V-A-A-R-K region spans residues 35-136 (VRKVAAKKTV…VAKKAVAARK (102 aa)).

It belongs to the histone H1/H5 family. HCT subfamily.

Its function is as follows. Might have a role in establishing the nucleoid structure of elementary bodies. The protein is Histone H1-like protein HC2 (hctB) of Chlamydia muridarum (strain MoPn / Nigg).